Consider the following 383-residue polypeptide: tRNA-specific 2-thiouridylase MnmA (383 aa).

Residues 30-37 (GMSGGVDS) and Met-56 contribute to the ATP site. Positions 116–118 (NPD) are interaction with target base in tRNA. The active-site Nucleophile is Cys-121. An intrachain disulfide couples Cys-121 to Cys-218. Gly-146 is an ATP binding site. The segment at 168 to 170 (KDQ) is interaction with tRNA. The Cysteine persulfide intermediate role is filled by Cys-218. Positions 330 to 331 (RY) are interaction with tRNA.

This sequence belongs to the MnmA/TRMU family.

It is found in the cytoplasm. It carries out the reaction S-sulfanyl-L-cysteinyl-[protein] + uridine(34) in tRNA + AH2 + ATP = 2-thiouridine(34) in tRNA + L-cysteinyl-[protein] + A + AMP + diphosphate + H(+). Catalyzes the 2-thiolation of uridine at the wobble position (U34) of tRNA, leading to the formation of s(2)U34. The protein is tRNA-specific 2-thiouridylase MnmA of Haemophilus influenzae (strain ATCC 51907 / DSM 11121 / KW20 / Rd).